A 275-amino-acid polypeptide reads, in one-letter code: 2-dehydro-3-deoxyphosphooctonate aldolase (275 aa).

It belongs to the KdsA family.

It is found in the cytoplasm. The enzyme catalyses D-arabinose 5-phosphate + phosphoenolpyruvate + H2O = 3-deoxy-alpha-D-manno-2-octulosonate-8-phosphate + phosphate. Its pathway is carbohydrate biosynthesis; 3-deoxy-D-manno-octulosonate biosynthesis; 3-deoxy-D-manno-octulosonate from D-ribulose 5-phosphate: step 2/3. The protein operates within bacterial outer membrane biogenesis; lipopolysaccharide biosynthesis. This is 2-dehydro-3-deoxyphosphooctonate aldolase from Francisella tularensis subsp. holarctica (strain LVS).